The following is a 1005-amino-acid chain: Small G protein signaling modulator 2 (1005 aa).

The RUN domain occupies 34–191 (HEDSSHIIAL…EYTKLKTADH (158 aa)). 2 disordered regions span residues 95 to 121 (QAEG…KAPA) and 205 to 236 (HRIR…SASE). Ser402 and Leu444 each carry phosphoserine. In terms of domain architecture, Rab-GAP TBC spans 566–938 (GVEHEIRKDV…AVWEVIWAAR (373 aa)). Disordered stretches follow at residues 657–687 (FISV…AGTP) and 729–761 (GFED…QETL). Over residues 672 to 681 (EDSKPKREQE) the composition is skewed to basic and acidic residues. Over residues 730–740 (FEDDGAGEDGS) the composition is skewed to acidic residues.

This sequence belongs to the RUTBC family. Interacts with RAB4A, RAB11A, RAP1A, RAP1B, RAP2A and RAP2B. No interaction with RAB27A. Interacts with RAB9A. As to expression, widely expressed.

It is found in the cytoplasm. Its subcellular location is the melanosome. In terms of biological role, possesses GTPase activator activity towards RAB32, RAB33B and RAB38. Regulates the trafficking of melanogenic enzymes TYR, TYRP1 and DCT/TYRP2 to melanosomes in melanocytes by inactivating RAB32 and RAB38. Inhibits RAB32 and RAB38 activation both directly by promoting their GTPase activity and indirectly by disrupting the RAB9A-HPS4 interaction which is required for RAB32/38 activation. The chain is Small G protein signaling modulator 2 (Sgsm2) from Mus musculus (Mouse).